The primary structure comprises 150 residues: Avidin-related protein 4/5 (150 aa).

A signal peptide spans M1–S24. The Avidin-like domain maps to R26–T147. An intrachain disulfide couples C28 to C105. Biotin-binding residues include N36, S40, Y57, T59, and D63. N-linked (GlcNAc...) asparagine glycans are attached at residues N67 and N93. Biotin-binding residues include S95 and N140. N141 carries an N-linked (GlcNAc...) asparagine glycan.

The protein belongs to the avidin/streptavidin family. Homotetramer.

Its subcellular location is the secreted. Functionally, forms a strong non-covalent specific complex with biotin. In Gallus gallus (Chicken), this protein is Avidin-related protein 4/5 (AVR4).